A 797-amino-acid polypeptide reads, in one-letter code: Hid-1 family protein P27G11.12 (797 aa).

It belongs to the hid-1 family.

Its subcellular location is the cytoplasm. The protein resides in the nucleus. In Schizosaccharomyces pombe (strain 972 / ATCC 24843) (Fission yeast), this protein is Hid-1 family protein P27G11.12.